Reading from the N-terminus, the 240-residue chain is Probable transcriptional regulator ycf27 (240 aa).

The region spanning 5 to 118 is the Response regulatory domain; sequence KILVIDDEAS…ELEARIRSVL (114 aa). D54 is modified (4-aspartylphosphate). The H-T-H motif DNA-binding region spans 74–92; the sequence is DVPIIMLTALSDVSDRITG. The segment at residues 133–234 is a DNA-binding region (ompR/PhoB-type); sequence SGIINIGFLK…ARGTGYLFQR (102 aa).

The protein resides in the plastid. It localises to the chloroplast. Its function is as follows. Probable promoter-specific protein mediating the interaction between DNA and RNA polymerase. This is Probable transcriptional regulator ycf27 (ycf27) from Porphyridium aerugineum (Red microalga).